We begin with the raw amino-acid sequence, 500 residues long: Glycerol kinase (500 aa).

Thr17 is a binding site for ADP. Residues Thr17, Thr18, and Ser19 each coordinate ATP. Thr17 contributes to the sn-glycerol 3-phosphate binding site. Position 21 (Arg21) interacts with ADP. Sn-glycerol 3-phosphate is bound by residues Arg87, Glu88, Tyr139, and Asp243. Residues Arg87, Glu88, Tyr139, Asp243, and Gln244 each contribute to the glycerol site. 2 residues coordinate ADP: Thr265 and Gly308. 4 residues coordinate ATP: Thr265, Gly308, Gln312, and Gly409. ADP is bound by residues Gly409 and Asn413.

Belongs to the FGGY kinase family.

It catalyses the reaction glycerol + ATP = sn-glycerol 3-phosphate + ADP + H(+). It participates in polyol metabolism; glycerol degradation via glycerol kinase pathway; sn-glycerol 3-phosphate from glycerol: step 1/1. Its activity is regulated as follows. Inhibited by fructose 1,6-bisphosphate (FBP). Its function is as follows. Key enzyme in the regulation of glycerol uptake and metabolism. Catalyzes the phosphorylation of glycerol to yield sn-glycerol 3-phosphate. This chain is Glycerol kinase, found in Pseudomonas fluorescens (strain Pf0-1).